Consider the following 446-residue polypeptide: MRECLSIHIGQAGVQIGDACWELYCLEHGIQPDGFILDHQHDNLENPKVEHMNASLDTFFHETRAGKHVPRTLFMDLEPTVIDGIRVGRYHSLFHPEQLVNGKEDAANTYARGRYSVGSEVIELVLERIRKLAEQCSGLQGFLIYRSFGGGTGSGFTSLLMERLSVEYCKKIKLEFSVYPSPRISTAVVEPYNAILTTHSTIEYSDCAFMVDNEALYDICQHKLGIERPSYASINRLIAQVSSSITASLRFEGPLNVDLIEFQTNLVPYPRIHFPITALAPIISAEKAYQEQLSVSDVTASCFEVSNQLVKCDPRLGKYMACCLLYRGDVVPKDVNEAIAAMKSRTSVQFVDWCPTGFKVGINYQPPAVVPGGDLARVQRAVCMLSNTTAIVEAWARLDHKFDLMYAKKAFLHWYITEGMELGEFVEAREDLAALEKDYEEVGLSF.

The short motif at 1-4 (MREC) is the MREC motif element. The GTP site is built by Q11, E78, S147, G151, T152, T186, N213, and N235. E78 contacts Mg(2+). Residue E261 is part of the active site.

Belongs to the tubulin family. In terms of assembly, dimer of alpha and beta chains. A typical microtubule is a hollow water-filled tube with an outer diameter of 25 nm and an inner diameter of 15 nM. Alpha-beta heterodimers associate head-to-tail to form protofilaments running lengthwise along the microtubule wall with the beta-tubulin subunit facing the microtubule plus end conferring a structural polarity. Microtubules usually have 13 protofilaments but different protofilament numbers can be found in some organisms and specialized cells. The cofactor is Mg(2+). In terms of processing, some glutamate residues at the C-terminus are polyglycylated, resulting in polyglycine chains on the gamma-carboxyl group. Glycylation is mainly limited to tubulin incorporated into axonemes (cilia and flagella) whereas glutamylation is prevalent in neuronal cells, centrioles, axonemes, and the mitotic spindle. Both modifications can coexist on the same protein on adjacent residues, and lowering polyglycylation levels increases polyglutamylation, and reciprocally. Cilia and flagella glycylation is required for their stability and maintenance. Flagella glycylation controls sperm motility. Post-translationally, some glutamate residues at the C-terminus are polyglutamylated, resulting in polyglutamate chains on the gamma-carboxyl group. Polyglutamylation plays a key role in microtubule severing by spastin (SPAST). SPAST preferentially recognizes and acts on microtubules decorated with short polyglutamate tails: severing activity by SPAST increases as the number of glutamates per tubulin rises from one to eight, but decreases beyond this glutamylation threshold. Glutamylation is also involved in cilia motility.

It is found in the cytoplasm. The protein resides in the cytoskeleton. It carries out the reaction GTP + H2O = GDP + phosphate + H(+). Tubulin is the major constituent of microtubules, a cylinder consisting of laterally associated linear protofilaments composed of alpha- and beta-tubulin heterodimers. Microtubules grow by the addition of GTP-tubulin dimers to the microtubule end, where a stabilizing cap forms. Below the cap, tubulin dimers are in GDP-bound state, owing to GTPase activity of alpha-tubulin. The polypeptide is Tubulin alpha chain-like 3 (Tubal3) (Mus musculus (Mouse)).